The following is a 138-amino-acid chain: Small ribosomal subunit protein uS9 (138 aa).

The segment at 99–138 is disordered; the sequence is DPDNRPPLKTEGYLTRDPRAKERKKYGLHKARKAPQYSKR. The span at 100–118 shows a compositional bias: basic and acidic residues; that stretch reads PDNRPPLKTEGYLTRDPRA. Residues 119-138 show a composition bias toward basic residues; it reads KERKKYGLHKARKAPQYSKR.

Belongs to the universal ribosomal protein uS9 family.

This chain is Small ribosomal subunit protein uS9, found in Nostoc punctiforme (strain ATCC 29133 / PCC 73102).